A 562-amino-acid chain; its full sequence is Glucan 1,3-beta-glucosidase 2 (562 aa).

The N-terminal stretch at Met1–Gly22 is a signal peptide. N-linked (GlcNAc...) asparagine glycosylation is found at Asn50, Asn77, Asn86, Asn90, Asn106, Asn157, and Asn220. The active-site Proton donor is the Glu254. 5 N-linked (GlcNAc...) asparagine glycosylation sites follow: Asn281, Asn285, Asn310, Asn317, and Asn322. The active-site Nucleophile is the His334. N-linked (GlcNAc...) asparagine glycosylation is found at Asn401, Asn480, and Asn539.

The protein belongs to the glycosyl hydrolase 5 (cellulase A) family.

The protein localises to the cell membrane. The catalysed reaction is Successive hydrolysis of beta-D-glucose units from the non-reducing ends of (1-&gt;3)-beta-D-glucans, releasing alpha-glucose.. The chain is Glucan 1,3-beta-glucosidase 2 (EXG2) from Saccharomyces cerevisiae (strain ATCC 204508 / S288c) (Baker's yeast).